The chain runs to 289 residues: Lipoyl synthase 2 (289 aa).

[4Fe-4S] cluster is bound by residues Cys-43, Cys-48, Cys-54, Cys-69, Cys-73, Cys-76, and Ser-282. The Radical SAM core domain maps to 55–271 (YAQKTATFLL…GAVARDLGFA (217 aa)).

This sequence belongs to the radical SAM superfamily. Lipoyl synthase family. [4Fe-4S] cluster serves as cofactor.

The protein localises to the cytoplasm. It catalyses the reaction [[Fe-S] cluster scaffold protein carrying a second [4Fe-4S](2+) cluster] + N(6)-octanoyl-L-lysyl-[protein] + 2 oxidized [2Fe-2S]-[ferredoxin] + 2 S-adenosyl-L-methionine + 4 H(+) = [[Fe-S] cluster scaffold protein] + N(6)-[(R)-dihydrolipoyl]-L-lysyl-[protein] + 4 Fe(3+) + 2 hydrogen sulfide + 2 5'-deoxyadenosine + 2 L-methionine + 2 reduced [2Fe-2S]-[ferredoxin]. Its pathway is protein modification; protein lipoylation via endogenous pathway; protein N(6)-(lipoyl)lysine from octanoyl-[acyl-carrier-protein]: step 2/2. Functionally, catalyzes the radical-mediated insertion of two sulfur atoms into the C-6 and C-8 positions of the octanoyl moiety bound to the lipoyl domains of lipoate-dependent enzymes, thereby converting the octanoylated domains into lipoylated derivatives. The chain is Lipoyl synthase 2 from Gloeobacter violaceus (strain ATCC 29082 / PCC 7421).